A 447-amino-acid polypeptide reads, in one-letter code: Na(+)-translocating NADH-quinone reductase subunit A (447 aa).

This sequence belongs to the NqrA family. In terms of assembly, composed of six subunits; NqrA, NqrB, NqrC, NqrD, NqrE and NqrF.

It catalyses the reaction a ubiquinone + n Na(+)(in) + NADH + H(+) = a ubiquinol + n Na(+)(out) + NAD(+). Its function is as follows. NQR complex catalyzes the reduction of ubiquinone-1 to ubiquinol by two successive reactions, coupled with the transport of Na(+) ions from the cytoplasm to the periplasm. NqrA to NqrE are probably involved in the second step, the conversion of ubisemiquinone to ubiquinol. This Photorhabdus laumondii subsp. laumondii (strain DSM 15139 / CIP 105565 / TT01) (Photorhabdus luminescens subsp. laumondii) protein is Na(+)-translocating NADH-quinone reductase subunit A.